A 194-amino-acid polypeptide reads, in one-letter code: Holliday junction branch migration complex subunit RuvA (194 aa).

The tract at residues Met-1–Ala-64 is domain I. Residues Thr-65–Ala-143 are domain II. The flexible linker stretch occupies residues Ala-144–Ala-147. The tract at residues Ala-147–Lys-194 is domain III.

Belongs to the RuvA family. Homotetramer. Forms an RuvA(8)-RuvB(12)-Holliday junction (HJ) complex. HJ DNA is sandwiched between 2 RuvA tetramers; dsDNA enters through RuvA and exits via RuvB. An RuvB hexamer assembles on each DNA strand where it exits the tetramer. Each RuvB hexamer is contacted by two RuvA subunits (via domain III) on 2 adjacent RuvB subunits; this complex drives branch migration. In the full resolvosome a probable DNA-RuvA(4)-RuvB(12)-RuvC(2) complex forms which resolves the HJ.

The protein resides in the cytoplasm. In terms of biological role, the RuvA-RuvB-RuvC complex processes Holliday junction (HJ) DNA during genetic recombination and DNA repair, while the RuvA-RuvB complex plays an important role in the rescue of blocked DNA replication forks via replication fork reversal (RFR). RuvA specifically binds to HJ cruciform DNA, conferring on it an open structure. The RuvB hexamer acts as an ATP-dependent pump, pulling dsDNA into and through the RuvAB complex. HJ branch migration allows RuvC to scan DNA until it finds its consensus sequence, where it cleaves and resolves the cruciform DNA. The sequence is that of Holliday junction branch migration complex subunit RuvA from Neisseria meningitidis serogroup B (strain ATCC BAA-335 / MC58).